Reading from the N-terminus, the 821-residue chain is Phenylalanine--tRNA ligase beta subunit (821 aa).

The region spanning arginine 39–arginine 149 is the tRNA-binding domain. One can recognise a B5 domain in the interval proline 409 to glutamate 503. Mg(2+)-binding residues include aspartate 481, aspartate 487, glutamate 490, and glutamate 491. Residues serine 724 to arginine 820 form the FDX-ACB domain.

It belongs to the phenylalanyl-tRNA synthetase beta subunit family. Type 1 subfamily. In terms of assembly, tetramer of two alpha and two beta subunits. Mg(2+) is required as a cofactor.

The protein resides in the cytoplasm. It carries out the reaction tRNA(Phe) + L-phenylalanine + ATP = L-phenylalanyl-tRNA(Phe) + AMP + diphosphate + H(+). The protein is Phenylalanine--tRNA ligase beta subunit of Thermosynechococcus vestitus (strain NIES-2133 / IAM M-273 / BP-1).